Reading from the N-terminus, the 198-residue chain is Probable molybdenum cofactor guanylyltransferase (198 aa).

Residues 9-11, K22, D66, and D95 contribute to the GTP site; that span reads LAG. Residue D95 coordinates Mg(2+).

This sequence belongs to the MobA family. Mg(2+) is required as a cofactor.

The protein localises to the cytoplasm. The enzyme catalyses Mo-molybdopterin + GTP + H(+) = Mo-molybdopterin guanine dinucleotide + diphosphate. Functionally, transfers a GMP moiety from GTP to Mo-molybdopterin (Mo-MPT) cofactor (Moco or molybdenum cofactor) to form Mo-molybdopterin guanine dinucleotide (Mo-MGD) cofactor. The protein is Probable molybdenum cofactor guanylyltransferase of Clostridium perfringens (strain SM101 / Type A).